The primary structure comprises 216 residues: Capsule polysaccharide export ATP-binding protein CtrD (216 aa).

An ABC transporter domain is found at 2-215; the sequence is ISVEHVSKRY…DKAYEYYNSL (214 aa). An ATP-binding site is contributed by 38–45; that stretch reads GRNGAGKS.

The protein belongs to the ABC transporter superfamily.

Its subcellular location is the cell inner membrane. It catalyses the reaction ATP + H2O + capsular polysaccharide-[capsular polysaccharide-binding protein]Side 1 = ADP + phosphate + capsular polysaccharideSide 2 + [capsular polysaccharide-binding protein]Side 1.. Functionally, putative ATP-binding protein, and an energy-coupling component of capsule polysaccharide export apparatus. In Neisseria meningitidis serogroup B (strain ATCC BAA-335 / MC58), this protein is Capsule polysaccharide export ATP-binding protein CtrD (ctrD).